Here is a 150-residue protein sequence, read N- to C-terminus: MSKVILTTEVSGLGSPGDVVEVKNGFSRNYLVPQGFAVIWSRGGEKQIEQIKAARAAREHATIEEAQDLKSRLEAKIVKLTVKAGQGGRLFGSVKTSDIAKAVEESGIGQVDKRKIEIPNPIKGTGNHEATIRLRDDIVATISLQVVAAK.

It belongs to the bacterial ribosomal protein bL9 family.

Binds to the 23S rRNA. This is Large ribosomal subunit protein bL9 from Clavibacter sepedonicus (Clavibacter michiganensis subsp. sepedonicus).